An 891-amino-acid chain; its full sequence is Mating-type protein A-alpha Y1 (891 aa).

Residues 146–205 (SKKPRPKFHSEYTPLLELYFRFNAYPTYADRRVLAEKTGMLTRQITVWFQNHRRRAKGPL) constitute a DNA-binding region (homeobox). Disordered stretches follow at residues 241–291 (PITL…PSTL), 319–339 (DIEMKDSSKPKRRKMKKLPKG), 393–437 (TRKP…RRVS), 610–718 (ARRK…EQSL), and 800–822 (MNWTASVGSNAQDPASQESGGDE). The segment covering 244-257 (LGNNKTPDLTTSSR) has biased composition (polar residues). Residues 328 to 337 (PKRRKMKKLP) show a composition bias toward basic residues. A compositionally biased stretch (low complexity) spans 427 to 437 (ASSTVPSRRVS). Over residues 627–638 (KKDKKERKKAGL) the composition is skewed to basic residues. Low complexity-rich tracts occupy residues 651 to 667 (VSSRASSLDSDVSTSAR) and 676 to 710 (QPSSSSRASSVASSGRTPSLSSTSSRRSSGMSMPS). Polar residues predominate over residues 800–818 (MNWTASVGSNAQDPASQES).

The protein localises to the nucleus. Functionally, specifies A-alpha-1 mating-type. May regulate the expression of genes specific to the homokaryotic cell type. The chain is Mating-type protein A-alpha Y1 from Schizophyllum commune (Split gill fungus).